Reading from the N-terminus, the 702-residue chain is Elongation factor G (702 aa).

The region spanning 8-290 (SRYRNIGISA…AVIEYLPSPT (283 aa)) is the tr-type G domain. GTP is bound by residues 17 to 24 (AHIDAGKT), 88 to 92 (DTPGH), and 142 to 145 (NKMD).

This sequence belongs to the TRAFAC class translation factor GTPase superfamily. Classic translation factor GTPase family. EF-G/EF-2 subfamily.

It is found in the cytoplasm. In terms of biological role, catalyzes the GTP-dependent ribosomal translocation step during translation elongation. During this step, the ribosome changes from the pre-translocational (PRE) to the post-translocational (POST) state as the newly formed A-site-bound peptidyl-tRNA and P-site-bound deacylated tRNA move to the P and E sites, respectively. Catalyzes the coordinated movement of the two tRNA molecules, the mRNA and conformational changes in the ribosome. The sequence is that of Elongation factor G from Edwardsiella ictaluri (strain 93-146).